A 542-amino-acid polypeptide reads, in one-letter code: LysM domain-containing protein ARB_00327 (542 aa).

The signal sequence occupies residues 1-35 (MLSSVLFPAMRTLLLLKYVFSLISLSAICCQTVSA). Residues Asn218, Asn298, Asn381, and Asn415 are each glycosylated (N-linked (GlcNAc...) asparagine). The 47-residue stretch at 264-310 (RWYGVKKGDYCNLIVLKFGITMDNFIFLNPALNSNCTNLYAEESYCV) folds into the LysM 1 domain. The segment at 439–484 (DSDEPTPTTPITTSDDPTSTSATPTTPTTSSKPSPGAPTMTGQPSA) is disordered. The segment covering 443–472 (PTPTTPITTSDDPTSTSATPTTPTTSSKPS) has biased composition (low complexity). The LysM 2 domain maps to 487 to 534 (KWHTVTNGESCTVIPKTFGITLEQFLAWNPTVKSDCTENFWAGYAYCV).

It localises to the secreted. Might have a role in sequestration of chitin oligosaccharides (breakdown products of fungal cell walls that are released during invasion and act as triggers of host immunity) to dampen host defense. The polypeptide is LysM domain-containing protein ARB_00327 (Arthroderma benhamiae (strain ATCC MYA-4681 / CBS 112371) (Trichophyton mentagrophytes)).